A 70-amino-acid polypeptide reads, in one-letter code: Movement protein TGBp3 (70 aa).

The Lumenal portion of the chain corresponds to 1 to 4 (MFPR). A helical transmembrane segment spans residues 5–25 (SGLGLAVAAAVVAYLVLLLAQ). The Cytoplasmic segment spans residues 26-70 (QLYMSNSSQCTIVITGESVSVVGCVYSEAFIELVKGLKPYYHPLG).

This sequence belongs to the Tymovirales TGBp3 protein family.

It localises to the host endoplasmic reticulum membrane. Its function is as follows. Plays a role in viral cell-to-cell propagation, by facilitating genome transport to neighboring plant cells through plasmosdesmata. May induce the formation of granular vesicles derived from the Endoplasmic reticulum, which align on actin filaments. This Crataegus (hawthorn) protein is Movement protein TGBp3.